The chain runs to 558 residues: Dihydroxy-acid dehydratase (558 aa).

Asp81 contributes to the Mg(2+) binding site. Cys122 serves as a coordination point for [2Fe-2S] cluster. Mg(2+) is bound by residues Asp123 and Lys124. Lys124 carries the post-translational modification N6-carboxylysine. Residue Cys195 coordinates [2Fe-2S] cluster. Mg(2+) is bound at residue Glu447. Ser473 acts as the Proton acceptor in catalysis.

The protein belongs to the IlvD/Edd family. Homodimer. The cofactor is [2Fe-2S] cluster. It depends on Mg(2+) as a cofactor.

The enzyme catalyses (2R)-2,3-dihydroxy-3-methylbutanoate = 3-methyl-2-oxobutanoate + H2O. It carries out the reaction (2R,3R)-2,3-dihydroxy-3-methylpentanoate = (S)-3-methyl-2-oxopentanoate + H2O. It participates in amino-acid biosynthesis; L-isoleucine biosynthesis; L-isoleucine from 2-oxobutanoate: step 3/4. The protein operates within amino-acid biosynthesis; L-valine biosynthesis; L-valine from pyruvate: step 3/4. In terms of biological role, functions in the biosynthesis of branched-chain amino acids. Catalyzes the dehydration of (2R,3R)-2,3-dihydroxy-3-methylpentanoate (2,3-dihydroxy-3-methylvalerate) into 2-oxo-3-methylpentanoate (2-oxo-3-methylvalerate) and of (2R)-2,3-dihydroxy-3-methylbutanoate (2,3-dihydroxyisovalerate) into 2-oxo-3-methylbutanoate (2-oxoisovalerate), the penultimate precursor to L-isoleucine and L-valine, respectively. In Bacillus pumilus (strain SAFR-032), this protein is Dihydroxy-acid dehydratase.